The chain runs to 866 residues: Potassium voltage-gated channel subfamily KQT member 3 (866 aa).

The interval 1-42 (MGLKARRPAGAAGGGGDGGGGGGGAANPAGGDAAAAGDEERK) is disordered. Over 1–120 (MGLKARRPAG…IYDALERPRG (120 aa)) the chain is Cytoplasmic. Residues 11-25 (AAGGGGDGGGGGGGA) show a composition bias toward gly residues. A compositionally biased stretch (low complexity) spans 26–36 (ANPAGGDAAAA). Thr-81 is subject to Phosphothreonine. Residues 121 to 143 (WALLYHALVFLIVLGCLILAVLT) traverse the membrane as a helical segment. Over 144 to 153 (TFREYETVSG) the chain is Extracellular. Residues 154-175 (DWLLLLETFAIFIFGAEFALRI) form a helical membrane-spanning segment. Over 176-193 (WAAGCCCRYKGWRGRLKF) the chain is Cytoplasmic. Residues 194-213 (ARKPLCMLDIFVLIASVPVV) traverse the membrane as a helical segment. The Extracellular segment spans residues 214–225 (AVGNQGNVLATS). A helical; Voltage-sensor membrane pass occupies residues 226-244 (LRSLRFLQILRMLRMDRRG). Residue Arg-243 participates in a 1,2-diacyl-sn-glycero-3-phospho-(1D-myo-inositol-4,5-bisphosphate) binding. Over 245–256 (GTWKLLGSAICA) the chain is Cytoplasmic. A helical membrane pass occupies residues 257–282 (HSKELITAWYIGFLTLILSSFLVYLV). Lys-259 is an a 1,2-diacyl-sn-glycero-3-phospho-(1D-myo-inositol-4,5-bisphosphate) binding site. Residues 283 to 302 (EKDVPEVDAQGEEMKEEFET) lie on the Extracellular side of the membrane. An intramembrane region (pore-forming) is located at residues 303 to 315 (YADALWWGLITLA). The Selectivity filter signature appears at 316-321 (TIGYGD). Over 316-326 (TIGYGDKTPKT) the chain is Extracellular. Residues 327 to 353 (WEGRLIAATFSLIGVSFFALPAGILGS) traverse the membrane as a helical segment. Residues 354-866 (GLALKVQEQH…SIWTPSGKPT (513 aa)) lie on the Cytoplasmic side of the membrane. Positions 356–537 (ALKVQEQHRQ…RLYKKKFKET (182 aa)) are mediates interaction with calmodulin. Lys-366 serves as a coordination point for a 1,2-diacyl-sn-glycero-3-phospho-(1D-myo-inositol-4,5-bisphosphate). Disordered regions lie at residues 574–617 (PGPP…EDQS), 656–676 (GFSP…EDRR), and 757–866 (QVEL…GKPT). The span at 837–866 (EPFTPSGSLPLSSTGDGISDSIWTPSGKPT) shows a compositional bias: polar residues.

Belongs to the potassium channel family. KQT (TC 1.A.1.15) subfamily. Kv7.3/KCNQ3 sub-subfamily. Heterotetramer with KCNQ2; forms heterotetrameric native M-channel responsible for the M-current. Interacts with calmodulin; the interaction is calcium-independent, constitutive and participates in the proper assembly of a functional M-channel. Heteromultimer with KCNQ5. May associate with KCNE2. Interacts with IQCJ-SCHIP1. Interacts (via the pore module) with SLC5A3/SMIT1; forms a coregulatory complex that alters ion selectivity, voltage dependence and gating kinetics of the channel. Post-translationally, KCNQ2/KCNQ3 are ubiquitinated by NEDD4L. Ubiquitination leads to protein degradation. Degradation induced by NEDD4L is inhibited by USP36.

The protein localises to the cell membrane. The enzyme catalyses K(+)(in) = K(+)(out). The catalysed reaction is Rb(+)(in) = Rb(+)(out). It carries out the reaction Cs(+)(in) = Cs(+)(out). It catalyses the reaction Na(+)(in) = Na(+)(out). Phosphatidylinositol-4,5-bisphosphate (PIP2) potentiates the activation of KCNQ channels by enhancing the electro-mechanical coupling of the voltage-sensing domain (VSD) and the pore-forming domain (PD). In the closed state of the channel, PIP2 is anchored at the S2-S3 loop; upon channel activation, PIP2 interacts with the S4-S5 linker and is involved in channel gating. Calcium suppresses KCNQ2-KCNQ3 channel currents, with calcium-bound calmodulin inducing a change in channel configuration which leads to the reduction of channel affinity for PIP2 and subsequent current suppression. Pore-forming subunit of the voltage-gated potassium (Kv) M-channel which is responsible for the M-current, a key controller of neuronal excitability. M-channel is composed of pore-forming subunits KCNQ2 and KCNQ3 assembled as heterotetramers. The native M-current has a slowly activating and deactivating potassium conductance which plays a critical role in determining the subthreshold electrical excitability of neurons as well as the responsiveness to synaptic inputs. M-channel is selectively permeable in vitro to other cations besides potassium, in decreasing order of affinity K(+) &gt; Rb(+) &gt; Cs(+) &gt; Na(+). M-channel association with SLC5A3/SMIT1 alters channel ion selectivity, increasing Na(+) and Cs(+) permeation relative to K(+). Suppressed by activation of M1 muscarinic acetylcholine receptors. KCNQ3 also associates with KCNQ5 to form a functional channel in vitro and may also contribute to the M-current in brain. The chain is Potassium voltage-gated channel subfamily KQT member 3 from Bos taurus (Bovine).